Reading from the N-terminus, the 184-residue chain is Large ribosomal subunit protein eL14 (184 aa).

A disordered region spans residues 149–184; that stretch reads KNAKKVDSTPAAKKRIEKARAARKAKPTAAKEKSKK. Basic residues predominate over residues 160–174; that stretch reads AKKRIEKARAARKAK.

The protein belongs to the eukaryotic ribosomal protein eL14 family.

This Trypanosoma congolense protein is Large ribosomal subunit protein eL14.